The primary structure comprises 154 residues: Ribosome maturation factor RimP (154 aa).

It belongs to the RimP family.

It is found in the cytoplasm. Its function is as follows. Required for maturation of 30S ribosomal subunits. The polypeptide is Ribosome maturation factor RimP (Salmonella gallinarum (strain 287/91 / NCTC 13346)).